Reading from the N-terminus, the 129-residue chain is Small ribosomal subunit protein uS11 (129 aa).

It belongs to the universal ribosomal protein uS11 family. Part of the 30S ribosomal subunit. Interacts with proteins S7 and S18. Binds to IF-3.

Functionally, located on the platform of the 30S subunit, it bridges several disparate RNA helices of the 16S rRNA. Forms part of the Shine-Dalgarno cleft in the 70S ribosome. The chain is Small ribosomal subunit protein uS11 from Paracoccus denitrificans (strain Pd 1222).